The sequence spans 710 residues: Protein phosphatase 1 regulatory subunit 37 (710 aa).

Residues 1 to 12 (MEIPPQEAPPGP) show a composition bias toward pro residues. The disordered stretch occupies residues 1–46 (MEIPPQEAPPGPGADADADAEAEEAPAEAGSSSGASPPTDGRLKAA). Positions 16–26 (ADADAEAEEAP) are enriched in acidic residues. Residues 27-38 (AEAGSSSGASPP) show a composition bias toward low complexity. Ser-54 and Ser-60 each carry phosphoserine. 5 LRR repeats span residues 224-244 (SLAV…MLLA), 252-273 (NLQE…AQLG), 281-301 (SLQI…AYIC), 310-330 (GLVT…AFLG), and 338-358 (SLET…RNLK). The interval 487-677 (PLEESGDLPA…APPGLEAKGS (191 aa)) is disordered. Positions 512–531 (SDSDSDSDREEQEEEEEDQS) are enriched in acidic residues. The segment covering 543 to 565 (SSSAPCPALLPSTDSLGPGDKSP) has biased composition (low complexity). Ser-581 carries the phosphoserine modification. A compositionally biased stretch (pro residues) spans 603–624 (PPVPPTSVSSPPPSPPSPPASP). Polar residues predominate over residues 637–649 (SEAQPQTEPSQAG). A compositionally biased stretch (low complexity) spans 656-676 (LKPEFALALAPEAPPGLEAKG).

Belongs to the PPP1R37 family. Interacts with PPP1CA.

Functionally, inhibits phosphatase activity of protein phosphatase 1 (PP1) complexes. This chain is Protein phosphatase 1 regulatory subunit 37 (Ppp1r37), found in Rattus norvegicus (Rat).